A 118-amino-acid chain; its full sequence is Small ribosomal subunit protein eS10 (118 aa).

The segment at 91 to 118 (RLKNAPAERPRPSRGGPRRGGYRGRARD) is disordered. The span at 106–118 (GPRRGGYRGRARD) shows a compositional bias: basic residues.

It belongs to the eukaryotic ribosomal protein eS10 family. Component of the small ribosomal subunit. Mature ribosomes consist of a small (40S) and a large (60S) subunit. The 40S subunit contains about 32 different proteins and 1 molecule of RNA (18S). The 60S subunit contains 45 different proteins and 3 molecules of RNA (25S, 5.8S and 5S).

Its subcellular location is the cytoplasm. Functionally, component of the ribosome, a large ribonucleoprotein complex responsible for the synthesis of proteins in the cell. The small ribosomal subunit (SSU) binds messenger RNAs (mRNAs) and translates the encoded message by selecting cognate aminoacyl-transfer RNA (tRNA) molecules. The large subunit (LSU) contains the ribosomal catalytic site termed the peptidyl transferase center (PTC), which catalyzes the formation of peptide bonds, thereby polymerizing the amino acids delivered by tRNAs into a polypeptide chain. The nascent polypeptides leave the ribosome through a tunnel in the LSU and interact with protein factors that function in enzymatic processing, targeting, and the membrane insertion of nascent chains at the exit of the ribosomal tunnel. The polypeptide is Small ribosomal subunit protein eS10 (RPS10) (Candida albicans (strain SC5314 / ATCC MYA-2876) (Yeast)).